We begin with the raw amino-acid sequence, 288 residues long: N-acetyltransferase ECO1 (288 aa).

A disordered region spans residues 1 to 50 (MKRDITQLLSPELSQSSSRNDKKRKPTNSNKKVQTVLNFPSSSPNASQST). The span at 7–18 (QLLSPELSQSSS) shows a compositional bias: low complexity. The segment covering 27–50 (TNSNKKVQTVLNFPSSSPNASQST) has biased composition (polar residues). The CCHH-type zinc-finger motif lies at 50 to 74 (TTCPTCGMTYYSHVSKDNDVHNKYH).

The protein belongs to the acetyltransferase family. ECO subfamily.

The protein resides in the nucleus. Functionally, probable acetyltransferase required for the establishment of sister chromatid cohesion and couple the processes of cohesion and DNA replication to ensure that only sister chromatids become paired together. In contrast to the structural cohesins, the deposition and establishment factors are required only during S phase. Acts by acetylating the cohesin complex component SMC3. The sequence is that of N-acetyltransferase ECO1 (ECO1) from Debaryomyces hansenii (strain ATCC 36239 / CBS 767 / BCRC 21394 / JCM 1990 / NBRC 0083 / IGC 2968) (Yeast).